A 699-amino-acid chain; its full sequence is Endogenous retrovirus group K member 19 Env polyprotein (699 aa).

The interval 1 to 47 (MNPSEMQRKAPPRRRRHRNRAPLTHKMNKMVTSEEQMKLPSTKKAEP) is disordered. A signal peptide spans 1 to 89 (MNPSEMQRKA…ALMIVSMVVS (89 aa)). Residues 10-20 (APPRRRRHRNR) are compositionally biased toward basic residues. Topologically, residues 90 to 632 (LPMPAGAAAA…NLNPVTWVKT (543 aa)) are extracellular. N100, N128, N153, N274, N355, N372, and N461 each carry an N-linked (GlcNAc...) asparagine glycan. A fusion peptide region spans residues 466-486 (FIFTLIAVIMGLIAVTATAAV). 4 N-linked (GlcNAc...) asparagine glycosylation sites follow: N507, N554, N566, and N585. A helical membrane pass occupies residues 633 to 653 (IGSTTIINLILILVCLFCLLL). Over 654 to 699 (VCRCTQQLRRDSDHRERAMMTMAVLSKRKGGNVGKSKRDQIVTVSV) the chain is Cytoplasmic.

The protein belongs to the beta type-B retroviral envelope protein family. HERV class-II K(HML-2) env subfamily. As to quaternary structure, the surface (SU) and transmembrane (TM) proteins form a heterodimer. SU and TM are attached by noncovalent interactions or by a labile interchain disulfide bond. Post-translationally, specific enzymatic cleavages in vivo yield the mature SU and TM proteins.

It localises to the cell membrane. The protein resides in the virion. Its function is as follows. Retroviral envelope proteins mediate receptor recognition and membrane fusion during early infection. Endogenous envelope proteins may have kept, lost or modified their original function during evolution. This endogenous envelope protein has lost its original fusogenic properties. In terms of biological role, SU mediates receptor recognition. TM anchors the envelope heterodimer to the viral membrane through one transmembrane domain. The other hydrophobic domain, called fusion peptide, mediates fusion of the viral membrane with the target cell membrane. This Homo sapiens (Human) protein is Endogenous retrovirus group K member 19 Env polyprotein (ERVK-19).